A 184-amino-acid chain; its full sequence is MGLEEKLPSGFLLSTVETLAGYVRKGSLWPATFGLACCAIEMMSTAGPRFDIARFGMERFSATPRQADLMIVAGRVSQKMAPVLRQIYDQMAEPKWVLAMGVCASSGGMFNNYAIVQGVDHVVPVDIYLPGCPPRPEMLLHAILKLHEKIAHMPLGANREEVIRETEAAALAATPTIEMKGLLR.

Residues C37, C38, C103, and C132 each contribute to the [4Fe-4S] cluster site.

Belongs to the complex I 20 kDa subunit family. In terms of assembly, NDH-1 is composed of 14 different subunits. Subunits NuoB, C, D, E, F, and G constitute the peripheral sector of the complex. It depends on [4Fe-4S] cluster as a cofactor.

The protein resides in the cell membrane. The enzyme catalyses a quinone + NADH + 5 H(+)(in) = a quinol + NAD(+) + 4 H(+)(out). In terms of biological role, NDH-1 shuttles electrons from NADH, via FMN and iron-sulfur (Fe-S) centers, to quinones in the respiratory chain. The immediate electron acceptor for the enzyme in this species is believed to be a menaquinone. Couples the redox reaction to proton translocation (for every two electrons transferred, four hydrogen ions are translocated across the cytoplasmic membrane), and thus conserves the redox energy in a proton gradient. The protein is NADH-quinone oxidoreductase subunit B of Mycobacteroides abscessus (strain ATCC 19977 / DSM 44196 / CCUG 20993 / CIP 104536 / JCM 13569 / NCTC 13031 / TMC 1543 / L948) (Mycobacterium abscessus).